The chain runs to 142 residues: 3-hydroxyacyl-[acyl-carrier-protein] dehydratase FabZ (142 aa).

His48 is a catalytic residue.

Belongs to the thioester dehydratase family. FabZ subfamily.

Its subcellular location is the cytoplasm. The enzyme catalyses a (3R)-hydroxyacyl-[ACP] = a (2E)-enoyl-[ACP] + H2O. Involved in unsaturated fatty acids biosynthesis. Catalyzes the dehydration of short chain beta-hydroxyacyl-ACPs and long chain saturated and unsaturated beta-hydroxyacyl-ACPs. This chain is 3-hydroxyacyl-[acyl-carrier-protein] dehydratase FabZ, found in Anoxybacillus flavithermus (strain DSM 21510 / WK1).